The following is a 486-amino-acid chain: Malonate-semialdehyde dehydrogenase (486 aa).

Residues phenylalanine 154, lysine 178, glutamate 181, arginine 182, and serine 231 each coordinate NAD(+). Residue cysteine 286 is the Nucleophile of the active site. Glutamate 386 contacts NAD(+).

Belongs to the aldehyde dehydrogenase family. IolA subfamily. In terms of assembly, homotetramer.

It catalyses the reaction 3-oxopropanoate + NAD(+) + CoA + H2O = hydrogencarbonate + acetyl-CoA + NADH + H(+). The enzyme catalyses 2-methyl-3-oxopropanoate + NAD(+) + CoA + H2O = propanoyl-CoA + hydrogencarbonate + NADH + H(+). Its pathway is polyol metabolism; myo-inositol degradation into acetyl-CoA; acetyl-CoA from myo-inositol: step 7/7. Catalyzes the oxidation of malonate semialdehyde (MSA) and methylmalonate semialdehyde (MMSA) into acetyl-CoA and propanoyl-CoA, respectively. Is involved in a myo-inositol catabolic pathway. Bicarbonate, and not CO2, is the end-product of the enzymatic reaction. The sequence is that of Malonate-semialdehyde dehydrogenase from Bacillus cereus (strain AH187).